The sequence spans 154 residues: Methylglyoxal synthase (154 aa).

Positions 1-154 (MELTTRTIAA…RYMQQRLDLK (154 aa)) constitute an MGS-like domain. Substrate is bound by residues histidine 19, lysine 23, 45–48 (TGTT), and 65–66 (SG). The active-site Proton donor/acceptor is the aspartate 71. Histidine 98 lines the substrate pocket.

It belongs to the methylglyoxal synthase family.

The enzyme catalyses dihydroxyacetone phosphate = methylglyoxal + phosphate. In terms of biological role, catalyzes the formation of methylglyoxal from dihydroxyacetone phosphate. The chain is Methylglyoxal synthase from Yersinia pseudotuberculosis serotype O:1b (strain IP 31758).